A 97-amino-acid chain; its full sequence is Putative pterin-4-alpha-carbinolamine dehydratase (97 aa).

The protein belongs to the pterin-4-alpha-carbinolamine dehydratase family.

It carries out the reaction (4aS,6R)-4a-hydroxy-L-erythro-5,6,7,8-tetrahydrobiopterin = (6R)-L-erythro-6,7-dihydrobiopterin + H2O. The protein is Putative pterin-4-alpha-carbinolamine dehydratase of Saccharolobus solfataricus (strain ATCC 35092 / DSM 1617 / JCM 11322 / P2) (Sulfolobus solfataricus).